The following is a 152-amino-acid chain: Small ribosomal subunit protein uS5 (152 aa).

Residues 14 to 77 enclose the S5 DRBM domain; that stretch reads FEEVIVNIGR…DDAHKNLVKV (64 aa).

The protein belongs to the universal ribosomal protein uS5 family. As to quaternary structure, part of the 30S ribosomal subunit. Contacts proteins S4 and S8.

With S4 and S12 plays an important role in translational accuracy. In terms of biological role, located at the back of the 30S subunit body where it stabilizes the conformation of the head with respect to the body. The sequence is that of Small ribosomal subunit protein uS5 from Sulfurovum sp. (strain NBC37-1).